We begin with the raw amino-acid sequence, 312 residues long: Phosphoribosylglycinamide formyltransferase, chloroplastic (312 aa).

The N-terminal 73 residues, 1–73 (MEAQQIISRF…EVCSSSWRIW (73 aa)), are a transit peptide targeting the chloroplast. 109-111 (GSN) is a N(1)-(5-phospho-beta-D-ribosyl)glycinamide binding site. (6R)-10-formyltetrahydrofolate contacts are provided by residues K162, 187–190 (LKLI), and N204. H206 (proton donor) is an active-site residue. D247 serves as a coordination point for (6R)-10-formyltetrahydrofolate. N(1)-(5-phospho-beta-D-ribosyl)glycinamide is bound at residue E276.

The protein belongs to the GART family.

The protein resides in the plastid. Its subcellular location is the chloroplast. It carries out the reaction N(1)-(5-phospho-beta-D-ribosyl)glycinamide + (6R)-10-formyltetrahydrofolate = N(2)-formyl-N(1)-(5-phospho-beta-D-ribosyl)glycinamide + (6S)-5,6,7,8-tetrahydrofolate + H(+). It participates in purine metabolism; IMP biosynthesis via de novo pathway; N(2)-formyl-N(1)-(5-phospho-D-ribosyl)glycinamide from N(1)-(5-phospho-D-ribosyl)glycinamide (10-formyl THF route): step 1/1. In Vigna unguiculata (Cowpea), this protein is Phosphoribosylglycinamide formyltransferase, chloroplastic (PUR3).